The primary structure comprises 509 residues: uncharacterized protein (509 aa).

Belongs to the MG032/MG096/MG288 family.

This is an uncharacterized protein from Mycoplasma pneumoniae (strain ATCC 29342 / M129 / Subtype 1) (Mycoplasmoides pneumoniae).